Reading from the N-terminus, the 623-residue chain is Membrane protein insertase YidC (623 aa).

5 helical membrane-spanning segments follow: residues 8–28 (LILA…LFPP), 379–399 (MGLA…PLAY), 449–469 (LPIL…FVTI), 507–527 (TTMA…SMWL), and 543–563 (IFAW…SGLV). Over residues 601–617 (KPAAQPAGKAANDGAAP) the composition is skewed to low complexity. The tract at residues 601–623 (KPAAQPAGKAANDGAAPAKKRKP) is disordered.

It belongs to the OXA1/ALB3/YidC family. Type 1 subfamily. In terms of assembly, interacts with the Sec translocase complex via SecD. Specifically interacts with transmembrane segments of nascent integral membrane proteins during membrane integration.

The protein localises to the cell inner membrane. Functionally, required for the insertion and/or proper folding and/or complex formation of integral membrane proteins into the membrane. Involved in integration of membrane proteins that insert both dependently and independently of the Sec translocase complex, as well as at least some lipoproteins. Aids folding of multispanning membrane proteins. The sequence is that of Membrane protein insertase YidC from Cereibacter sphaeroides (strain ATCC 17023 / DSM 158 / JCM 6121 / CCUG 31486 / LMG 2827 / NBRC 12203 / NCIMB 8253 / ATH 2.4.1.) (Rhodobacter sphaeroides).